The chain runs to 445 residues: ATP-dependent protease ATPase subunit HslU (445 aa).

Residues I17, 59–64 (GVGKTE), D254, E319, and R391 each bind ATP.

The protein belongs to the ClpX chaperone family. HslU subfamily. As to quaternary structure, a double ring-shaped homohexamer of HslV is capped on each side by a ring-shaped HslU homohexamer. The assembly of the HslU/HslV complex is dependent on binding of ATP.

The protein resides in the cytoplasm. In terms of biological role, ATPase subunit of a proteasome-like degradation complex; this subunit has chaperone activity. The binding of ATP and its subsequent hydrolysis by HslU are essential for unfolding of protein substrates subsequently hydrolyzed by HslV. HslU recognizes the N-terminal part of its protein substrates and unfolds these before they are guided to HslV for hydrolysis. The protein is ATP-dependent protease ATPase subunit HslU of Pseudomonas syringae pv. tomato (strain ATCC BAA-871 / DC3000).